A 196-amino-acid polypeptide reads, in one-letter code: Putative AAA family ATPase L572 (196 aa).

Position 32–39 (32–39 (NAVNCKET)) interacts with ATP.

The protein belongs to the AAA ATPase family.

The polypeptide is Putative AAA family ATPase L572 (Acanthamoeba polyphaga mimivirus (APMV)).